A 240-amino-acid chain; its full sequence is Uridylate kinase (240 aa).

12-15 serves as a coordination point for ATP; the sequence is KLSG. The tract at residues 20 to 25 is involved in allosteric activation by GTP; the sequence is GEQGFG. Residue Gly-54 participates in UMP binding. Gly-55 and Arg-59 together coordinate ATP. UMP-binding positions include Asp-74 and 135 to 142; that span reads TGNPYFST. ATP-binding residues include Asn-163, Tyr-169, and Asp-172.

Belongs to the UMP kinase family. Homohexamer.

The protein localises to the cytoplasm. It catalyses the reaction UMP + ATP = UDP + ADP. It participates in pyrimidine metabolism; CTP biosynthesis via de novo pathway; UDP from UMP (UMPK route): step 1/1. With respect to regulation, allosterically activated by GTP. Inhibited by UTP. Catalyzes the reversible phosphorylation of UMP to UDP. This chain is Uridylate kinase, found in Bacillus anthracis.